The chain runs to 355 residues: Uroporphyrinogen decarboxylase (355 aa).

Residues 27-31 (RQAGR), Asp-77, Tyr-154, Thr-209, and His-328 contribute to the substrate site.

This sequence belongs to the uroporphyrinogen decarboxylase family. In terms of assembly, homodimer.

Its subcellular location is the cytoplasm. The catalysed reaction is uroporphyrinogen III + 4 H(+) = coproporphyrinogen III + 4 CO2. It functions in the pathway porphyrin-containing compound metabolism; protoporphyrin-IX biosynthesis; coproporphyrinogen-III from 5-aminolevulinate: step 4/4. Catalyzes the decarboxylation of four acetate groups of uroporphyrinogen-III to yield coproporphyrinogen-III. In Vibrio cholerae serotype O1 (strain ATCC 39541 / Classical Ogawa 395 / O395), this protein is Uroporphyrinogen decarboxylase.